The following is a 332-amino-acid chain: MALLCYNRGCGQRFDPETNSDDACTYHPGVPVFHDALKGWSCCKRRTTDFSDFLSIVGCTKGRHNSEKPPESVKPEVKTTEKKELSELKPKFQEHIIQAPKPVEAIKRPSPDEPMTNLELKISASLKQALDKLKLSSGNEENKKEEDNDEIKIGTSCKNGGCSKTYRGLESLEEVCVYHSGVPISHEGMKYWSCCRRKTSDFNTFLAQEGCTKGKHMWTKKDAGKKVVPCRHDWHQTGGEVTISVYAKNSLPELSRVEANSTLLNVHIVFEGEKEFEQNVKLWGVIDVKRSYVTMTATKIEITMRKAEPMQWASLELPAAKKQEKQKDDTTD.

N-acetylalanine is present on Ala2. Residues 2–77 (ALLCYNRGCG…KPPESVKPEV (76 aa)) form an interaction with PPP5C region. The Zn(2+) site is built by Cys5, Cys10, Cys24, His27, Cys42, and Cys43. CHORD domains follow at residues 5-64 (CYNR…KGRH) and 157-216 (CKNG…KGKH). Thr47 is modified (phosphothreonine). Position 51 is a phosphoserine (Ser51). The Zn(2+) site is built by Cys59, His64, Cys157, Cys162, Cys176, His179, Cys194, Cys195, Cys211, and His216. Residues 62-81 (GRHNSEKPPESVKPEVKTTE) form a disordered region. Positions 64–81 (HNSEKPPESVKPEVKTTE) are enriched in basic and acidic residues. The tract at residues 65-316 (NSEKPPESVK…AEPMQWASLE (252 aa)) is interaction with HSP90AA1 and HSP90AB1. Residues 227-316 (VVPCRHDWHQ…AEPMQWASLE (90 aa)) form the CS domain.

In terms of assembly, interacts with HSP90AA1, HSP90AB1, PPP5C, ROCK1 and ROCK2.

Regulates centrosome duplication, probably by inhibiting the kinase activity of ROCK2. Proposed to act as co-chaperone for HSP90. May play a role in the regulation of NOD1 via a HSP90 chaperone complex. In vitro, has intrinsic chaperone activity. This function may be achieved by inhibiting association of ROCK2 with NPM1. Plays a role in ensuring the localization of the tyrosine kinase receptor EGFR to the plasma membrane, and thus ensures the subsequent regulation of EGFR activity and EGF-induced actin cytoskeleton remodeling. Involved in stress response. Prevents tumorigenesis. The sequence is that of Cysteine and histidine-rich domain-containing protein 1 (CHORDC1) from Pongo abelii (Sumatran orangutan).